The sequence spans 609 residues: UvrABC system protein C (609 aa).

One can recognise a GIY-YIG domain in the interval 16 to 94 (SSPGVYRMYD…IKQYMPKYNV (79 aa)). The UVR domain maps to 203–238 (HQVMSVLVGKMEQAASDMRYEQAALYRDQITALRRV).

It belongs to the UvrC family. As to quaternary structure, interacts with UvrB in an incision complex.

It is found in the cytoplasm. Its function is as follows. The UvrABC repair system catalyzes the recognition and processing of DNA lesions. UvrC both incises the 5' and 3' sides of the lesion. The N-terminal half is responsible for the 3' incision and the C-terminal half is responsible for the 5' incision. The sequence is that of UvrABC system protein C from Shewanella halifaxensis (strain HAW-EB4).